We begin with the raw amino-acid sequence, 276 residues long: Large ribosomal subunit protein uL2 (276 aa).

2 disordered regions span residues 35-58 (RKLSKTGGRNSYGRMTSRHRGGGH) and 218-276 (RPIT…KNRK). Over residues 255-276 (RRPKKASNKMIVRRRPNGKNRK) the composition is skewed to basic residues.

The protein belongs to the universal ribosomal protein uL2 family. Part of the 50S ribosomal subunit. Forms a bridge to the 30S subunit in the 70S ribosome.

One of the primary rRNA binding proteins. Required for association of the 30S and 50S subunits to form the 70S ribosome, for tRNA binding and peptide bond formation. It has been suggested to have peptidyltransferase activity; this is somewhat controversial. Makes several contacts with the 16S rRNA in the 70S ribosome. This is Large ribosomal subunit protein uL2 from Bifidobacterium adolescentis (strain ATCC 15703 / DSM 20083 / NCTC 11814 / E194a).